Consider the following 225-residue polypeptide: UPF0758 protein Sbal223_0402 (225 aa).

Residues 102-224 (VLTNPDLTRD…IVSFAERGWI (123 aa)) form the MPN domain. 3 residues coordinate Zn(2+): His173, His175, and Asp186. Residues 173-186 (HNHPSGIAEPSQAD) carry the JAMM motif motif.

This sequence belongs to the UPF0758 family.

This chain is UPF0758 protein Sbal223_0402, found in Shewanella baltica (strain OS223).